A 381-amino-acid polypeptide reads, in one-letter code: Creatine kinase B-type (381 aa).

At S4 the chain carries Phosphoserine. The region spanning 11 to 98 is the Phosphagen kinase N-terminal domain; the sequence is KLRFPAEDEF…FDPIIEERHG (88 aa). T35 carries the phosphothreonine modification. K45 participates in a covalent cross-link: Glycyl lysine isopeptide (Lys-Gly) (interchain with G-Cter in ubiquitin). Position 72 (V72) interacts with creatine. Positions 96–110 are enriched in basic and acidic residues; that stretch reads RHGGYQPSDEHKTDL. The segment at 96-123 is disordered; it reads RHGGYQPSDEHKTDLNPDNLQGGDDLDP. K107 is covalently cross-linked (Glycyl lysine isopeptide (Lys-Gly) (interchain with G-Cter in ubiquitin)). Y125 is modified (phosphotyrosine). One can recognise a Phosphagen kinase C-terminal domain in the interval 125-367; sequence YVLSSRVRTG…KLLIEMEQRL (243 aa). Residues 128 to 132, R130, R132, and H191 contribute to the ATP site; that span reads SSRVR. Residues 130 to 138 are internal MTS-like signal; it reads RVRTGRSIR. S199 carries the phosphoserine modification. E232 contributes to the creatine binding site. R236 contacts ATP. Y269 carries the post-translational modification 3'-nitrotyrosine. S285 is a binding site for creatine. Position 292 (R292) interacts with ATP. Phosphoserine is present on S309. Residues R320, 320-325, and D335 contribute to the ATP site; that span reads RGTGGV. T322 carries the phosphothreonine modification. Residue K381 forms a Glycyl lysine isopeptide (Lys-Gly) (interchain with G-Cter in ubiquitin) linkage.

It belongs to the ATP:guanido phosphotransferase family. Dimer of identical or non-identical chains, which can be either B (brain type) or M (muscle type). With MM being the major form in skeletal muscle and myocardium, MB existing in myocardium, and BB existing in many tissues, especially brain. Interacts with SLC12A6 (via C-terminus); the interaction may be required for SLC12A6 potassium-chloride cotransport activity. In terms of processing, ubiquitinated by the ECS(ASB9) complex, leading to its degradation by the proteasome. In terms of tissue distribution, expressed in hippocampus and corpus callosum (at protein level).

It localises to the cytoplasm. Its subcellular location is the cytosol. The protein resides in the mitochondrion. It is found in the cell membrane. It carries out the reaction creatine + ATP = N-phosphocreatine + ADP + H(+). Reversibly catalyzes the transfer of phosphate between ATP and various phosphogens (e.g. creatine phosphate). Creatine kinase isoenzymes play a central role in energy transduction in tissues with large, fluctuating energy demands, such as skeletal muscle, heart, brain and spermatozoa. Acts as a key regulator of adaptive thermogenesis as part of the futile creatine cycle: localizes to the mitochondria of thermogenic fat cells and acts by mediating phosphorylation of creatine to initiate a futile cycle of creatine phosphorylation and dephosphorylation. During the futile creatine cycle, creatine and N-phosphocreatine are in a futile cycle, which dissipates the high energy charge of N-phosphocreatine as heat without performing any mechanical or chemical work. This chain is Creatine kinase B-type, found in Mus musculus (Mouse).